The chain runs to 135 residues: Ribosome-binding factor A (135 aa).

The protein belongs to the RbfA family. In terms of assembly, monomer. Binds 30S ribosomal subunits, but not 50S ribosomal subunits or 70S ribosomes.

It is found in the cytoplasm. One of several proteins that assist in the late maturation steps of the functional core of the 30S ribosomal subunit. Associates with free 30S ribosomal subunits (but not with 30S subunits that are part of 70S ribosomes or polysomes). Required for efficient processing of 16S rRNA. May interact with the 5'-terminal helix region of 16S rRNA. The chain is Ribosome-binding factor A from Methylobacterium nodulans (strain LMG 21967 / CNCM I-2342 / ORS 2060).